We begin with the raw amino-acid sequence, 33 residues long: Large ribosomal subunit protein eL21 (33 aa).

Belongs to the eukaryotic ribosomal protein eL21 family. As to quaternary structure, component of the large ribosomal subunit.

The protein localises to the cytoplasm. The protein resides in the cytosol. Its subcellular location is the endoplasmic reticulum. In terms of biological role, component of the large ribosomal subunit. The ribosome is a large ribonucleoprotein complex responsible for the synthesis of proteins in the cell. The sequence is that of Large ribosomal subunit protein eL21 (rpl21) from Xenopus laevis (African clawed frog).